A 610-amino-acid polypeptide reads, in one-letter code: Sterol O-acyltransferase 1 (610 aa).

A phosphoserine mark is found at Ser21 and Ser45. The interval 41 to 81 (SMEVSPRSSTTSLVEPVESTEGVESTEAERVAGKQEQEEEY) is disordered. The span at 67 to 76 (EAERVAGKQE) shows a compositional bias: basic and acidic residues. 5 consecutive transmembrane segments (helical) span residues 182-202 (LESN…WIAI), 229-249 (LFTI…VVFV), 264-284 (GFVA…PIYV), 371-391 (ISCS…QINY), and 409-429 (IIGT…PVAM). The FYXDWWN motif motif lies at 491-497 (FYGDWWN). The next 2 membrane-spanning stretches (helical) occupy residues 535–555 (ATLF…FAIF) and 590–610 (VVFS…YLTL). Residue His547 is part of the active site.

This sequence belongs to the membrane-bound acyltransferase family. Sterol o-acyltransferase subfamily.

Its subcellular location is the endoplasmic reticulum membrane. It catalyses the reaction lanosterol + an acyl-CoA = lanosteryl ester + CoA. Sterol O-acyltransferase that catalyzes the formation of stery esters. This chain is Sterol O-acyltransferase 1, found in Saccharomyces cerevisiae (strain ATCC 204508 / S288c) (Baker's yeast).